The sequence spans 152 residues: Nucleoside diphosphate kinase B (152 aa).

Positions 1-66 (MANLERTFIA…DRPFFPGLVK (66 aa)) are interaction with AKAP13. Residues K12, F60, R88, T94, R105, and N115 each coordinate ATP. The Pros-phosphohistidine intermediate role is filled by H118.

This sequence belongs to the NDK family. As to quaternary structure, hexamer of two different chains: An and B (A6, A5B, A4B2, A3B3, A2B4, AB5, B6). Interacts with CAPN8. Interacts with AKAP13. Interacts with ITGB1BP1 (via C-terminal domain region). Interacts with BCL2L10. It depends on Mg(2+) as a cofactor. As to expression, ubiquitously expressed.

The protein localises to the cytoplasm. Its subcellular location is the cell projection. It localises to the lamellipodium. It is found in the ruffle. The protein resides in the perinuclear region. The protein localises to the nucleus. It carries out the reaction a 2'-deoxyribonucleoside 5'-diphosphate + ATP = a 2'-deoxyribonucleoside 5'-triphosphate + ADP. It catalyses the reaction a ribonucleoside 5'-diphosphate + ATP = a ribonucleoside 5'-triphosphate + ADP. The enzyme catalyses ATP + protein L-histidine = ADP + protein N-phospho-L-histidine.. Its function is as follows. Major role in the synthesis of nucleoside triphosphates other than ATP. The ATP gamma phosphate is transferred to the NDP beta phosphate via a ping-pong mechanism, using a phosphorylated active-site intermediate. Negatively regulates Rho activity by interacting with AKAP13/LBC. Acts as a transcriptional activator of the MYC gene; binds DNA non-specifically. Binds to both single-stranded guanine- and cytosine-rich strands within the nuclease hypersensitive element (NHE) III(1) region of the MYC gene promoter. Does not bind to duplex NHE III(1). Has G-quadruplex (G4) DNA-binding activity, which is independent of its nucleotide-binding and kinase activity. Binds both folded and unfolded G4 with similar low nanomolar affinities. Stabilizes folded G4s regardless of whether they are prefolded or not. Exhibits histidine protein kinase activity. This is Nucleoside diphosphate kinase B (NME2) from Homo sapiens (Human).